A 249-amino-acid polypeptide reads, in one-letter code: MRRGRSRPAGAAPAALLLPLLLLLPLTGCDRLAAAPAEHAAAAGDPAQDADRGRRLPPVVDHVRTDDPVVFLTYDDGAERDPAFVGLIRERRLPVTLFLTDTVAGPAYGDLARLRPFGASLQNHTLDHRSLRGLPHAGQRAEICGQQTKLRSRFGVRAHLFRPPHGTYDTTTLRAAADCGITALVLWRATLDADGALTYTRGDHRLHPGDIVAVDPDHPTAANLAARTERLLETIEEQGLRVGNLENYL.

Positions 1–43 (MRRGRSRPAGAAPAALLLPLLLLLPLTGCDRLAAAPAEHAAAA) are cleaved as a signal peptide. A disordered region spans residues 40–59 (AAAAGDPAQDADRGRRLPPV). A NodB homology domain is found at 68 to 243 (PVVFLTYDDG…TIEEQGLRVG (176 aa)).

This is an uncharacterized protein from Streptomyces coelicolor (strain ATCC BAA-471 / A3(2) / M145).